The following is a 130-amino-acid chain: Small ribosomal subunit protein uS9 (130 aa).

This sequence belongs to the universal ribosomal protein uS9 family.

In Burkholderia vietnamiensis (strain G4 / LMG 22486) (Burkholderia cepacia (strain R1808)), this protein is Small ribosomal subunit protein uS9.